The following is a 136-amino-acid chain: Large ribosomal subunit protein eL27A (136 aa).

This sequence belongs to the eukaryotic ribosomal protein eL27 family. As to quaternary structure, component of the large ribosomal subunit (LSU). Mature yeast ribosomes consist of a small (40S) and a large (60S) subunit. The 40S small subunit contains 1 molecule of ribosomal RNA (18S rRNA) and at least 33 different proteins. The large 60S subunit contains 3 rRNA molecules (25S, 5.8S and 5S rRNA) and at least 46 different proteins.

The protein resides in the cytoplasm. It is found in the nucleus. Functionally, component of the ribosome, a large ribonucleoprotein complex responsible for the synthesis of proteins in the cell. The small ribosomal subunit (SSU) binds messenger RNAs (mRNAs) and translates the encoded message by selecting cognate aminoacyl-transfer RNA (tRNA) molecules. The large subunit (LSU) contains the ribosomal catalytic site termed the peptidyl transferase center (PTC), which catalyzes the formation of peptide bonds, thereby polymerizing the amino acids delivered by tRNAs into a polypeptide chain. The nascent polypeptides leave the ribosome through a tunnel in the LSU and interact with protein factors that function in enzymatic processing, targeting, and the membrane insertion of nascent chains at the exit of the ribosomal tunnel. The chain is Large ribosomal subunit protein eL27A (rpl2701) from Schizosaccharomyces pombe (strain 972 / ATCC 24843) (Fission yeast).